The following is a 333-amino-acid chain: Cathepsin M (333 aa).

A signal peptide spans 1-15 (MTSAIFLAMLCLGMA). A propeptide spans 16 to 113 (LPSPAPDPIL…KSVQKRLSVN (98 aa)) (activation peptide). Cystine bridges form between Cys135-Cys178 and Cys169-Cys211. Residue Cys138 is part of the active site. N-linked (GlcNAc...) asparagine glycosylation is found at Asn217, Asn221, and Asn268. A disulfide bridge connects residues Cys269 and Cys322. Residues His276 and Asn300 contribute to the active site.

Belongs to the peptidase C1 family. Placenta.

The protein localises to the lysosome. The protein is Cathepsin M (Ctsm) of Mus musculus (Mouse).